A 150-amino-acid chain; its full sequence is uncharacterized protein (150 aa).

An HTH asnC-type domain is found at 5–66 (LDKVDRRLLE…KPNYKKLNLG (62 aa)). The H-T-H motif DNA-binding region spans 24–43 (IATLSKKLGIPRTTVHYRIK).

This is an uncharacterized protein from Pyrococcus horikoshii (strain ATCC 700860 / DSM 12428 / JCM 9974 / NBRC 100139 / OT-3).